Here is a 547-residue protein sequence, read N- to C-terminus: CTP synthase (547 aa).

Residues 1-265 form an amidoligase domain region; it reads MARYIFITGG…DQAVLDAFDI (265 aa). Serine 13 serves as a coordination point for CTP. Serine 13 serves as a coordination point for UTP. Residues 14-19 and aspartate 71 each bind ATP; that span reads SLGKGL. Aspartate 71 and glutamate 139 together coordinate Mg(2+). CTP contacts are provided by residues 146–148, 186–191, and lysine 222; these read DIE and KTKPTQ. Residues 186–191 and lysine 222 each bind UTP; that span reads KTKPTQ. The 256-residue stretch at 291–546 folds into the Glutamine amidotransferase type-1 domain; it reads KVAIVGKYTQ…IRAAKENSRL (256 aa). L-glutamine is bound at residue glycine 353. Cysteine 380 (nucleophile; for glutamine hydrolysis) is an active-site residue. Residues 381 to 384, glutamate 404, and arginine 474 each bind L-glutamine; that span reads LGMQ. Active-site residues include histidine 519 and glutamate 521.

Belongs to the CTP synthase family. In terms of assembly, homotetramer.

The catalysed reaction is UTP + L-glutamine + ATP + H2O = CTP + L-glutamate + ADP + phosphate + 2 H(+). The enzyme catalyses L-glutamine + H2O = L-glutamate + NH4(+). It carries out the reaction UTP + NH4(+) + ATP = CTP + ADP + phosphate + 2 H(+). The protein operates within pyrimidine metabolism; CTP biosynthesis via de novo pathway; CTP from UDP: step 2/2. Its activity is regulated as follows. Allosterically activated by GTP, when glutamine is the substrate; GTP has no effect on the reaction when ammonia is the substrate. The allosteric effector GTP functions by stabilizing the protein conformation that binds the tetrahedral intermediate(s) formed during glutamine hydrolysis. Inhibited by the product CTP, via allosteric rather than competitive inhibition. In terms of biological role, catalyzes the ATP-dependent amination of UTP to CTP with either L-glutamine or ammonia as the source of nitrogen. Regulates intracellular CTP levels through interactions with the four ribonucleotide triphosphates. In Roseobacter denitrificans (strain ATCC 33942 / OCh 114) (Erythrobacter sp. (strain OCh 114)), this protein is CTP synthase.